The sequence spans 148 residues: 3-hydroxyacyl-[acyl-carrier-protein] dehydratase FabZ (148 aa).

Histidine 50 is a catalytic residue.

Belongs to the thioester dehydratase family. FabZ subfamily.

It is found in the cytoplasm. It carries out the reaction a (3R)-hydroxyacyl-[ACP] = a (2E)-enoyl-[ACP] + H2O. In terms of biological role, involved in unsaturated fatty acids biosynthesis. Catalyzes the dehydration of short chain beta-hydroxyacyl-ACPs and long chain saturated and unsaturated beta-hydroxyacyl-ACPs. This is 3-hydroxyacyl-[acyl-carrier-protein] dehydratase FabZ from Levilactobacillus brevis (strain ATCC 367 / BCRC 12310 / CIP 105137 / JCM 1170 / LMG 11437 / NCIMB 947 / NCTC 947) (Lactobacillus brevis).